The following is a 547-amino-acid chain: Chaperonin GroEL (547 aa).

ATP contacts are provided by residues 30–33 (TLGP), Lys-51, 87–91 (DGTTT), Gly-415, 479–481 (NAA), and Asp-495.

It belongs to the chaperonin (HSP60) family. In terms of assembly, forms a cylinder of 14 subunits composed of two heptameric rings stacked back-to-back. Interacts with the co-chaperonin GroES.

Its subcellular location is the cytoplasm. The enzyme catalyses ATP + H2O + a folded polypeptide = ADP + phosphate + an unfolded polypeptide.. Functionally, together with its co-chaperonin GroES, plays an essential role in assisting protein folding. The GroEL-GroES system forms a nano-cage that allows encapsulation of the non-native substrate proteins and provides a physical environment optimized to promote and accelerate protein folding. This Marinomonas sp. (strain MWYL1) protein is Chaperonin GroEL.